The chain runs to 478 residues: Cysteine protease ATG4B (478 aa).

Polar residues predominate over residues 1 to 15; it reads MTSLPDRGVSSSSSD. Residues 1–20 form a disordered region; it reads MTSLPDRGVSSSSSDPLCEG. Catalysis depends on Cys-164, which acts as the Nucleophile. Active-site residues include Asp-361 and His-363.

It belongs to the peptidase C54 family. Interacts with ATG8. Constitutively expressed.

Its subcellular location is the cytoplasm. The catalysed reaction is [protein]-C-terminal L-amino acid-glycyl-phosphatidylethanolamide + H2O = [protein]-C-terminal L-amino acid-glycine + a 1,2-diacyl-sn-glycero-3-phosphoethanolamine. Functionally, cysteine protease that plays a key role in autophagy by mediating both proteolytic activation and delipidation of ATG8 family proteins. The protease activity is required for proteolytic activation of ATG8 family proteins: cleaves the C-terminal amino acid of ATG8 proteins to reveal a C-terminal glycine. Exposure of the glycine at the C-terminus is essential for ATG8 proteins conjugation to phosphatidylethanolamine (PE) and insertion to membranes, which is necessary for autophagy. In addition to the protease activity, also mediates delipidation of PE-conjugated ATG8 proteins. This Oryza sativa subsp. indica (Rice) protein is Cysteine protease ATG4B (ATG4B).